Here is a 473-residue protein sequence, read N- to C-terminus: Ribulose bisphosphate carboxylase large chain (473 aa).

Positions 116 and 166 each coordinate substrate. The Proton acceptor role is filled by Lys-168. Lys-170 is a binding site for substrate. Lys-194, Asp-196, and Glu-197 together coordinate Mg(2+). Residue Lys-194 is modified to N6-carboxylysine. His-287 serves as the catalytic Proton acceptor. Substrate contacts are provided by Arg-288, His-320, and Ser-372.

The protein belongs to the RuBisCO large chain family. Type I subfamily. Heterohexadecamer of 8 large chains and 8 small chains. The cofactor is Mg(2+).

The catalysed reaction is 2 (2R)-3-phosphoglycerate + 2 H(+) = D-ribulose 1,5-bisphosphate + CO2 + H2O. It carries out the reaction D-ribulose 1,5-bisphosphate + O2 = 2-phosphoglycolate + (2R)-3-phosphoglycerate + 2 H(+). Functionally, ruBisCO catalyzes two reactions: the carboxylation of D-ribulose 1,5-bisphosphate, the primary event in carbon dioxide fixation, as well as the oxidative fragmentation of the pentose substrate. Both reactions occur simultaneously and in competition at the same active site. The polypeptide is Ribulose bisphosphate carboxylase large chain (Thiomonas intermedia (strain K12) (Thiobacillus intermedius)).